We begin with the raw amino-acid sequence, 424 residues long: Probable ribonuclease FAU-1 (424 aa).

It belongs to the FAU-1 family.

Probable RNase involved in rRNA stability through maturation and/or degradation of precursor rRNAs. Binds to RNA in loop regions with AU-rich sequences. The polypeptide is Probable ribonuclease FAU-1 (Saccharolobus islandicus (strain M.16.27) (Sulfolobus islandicus)).